Here is a 303-residue protein sequence, read N- to C-terminus: Zinc transporter ZIP9-A (303 aa).

The chain crosses the membrane as a helical span at residues Ile7–Ala27. Residue Asn29 is glycosylated (N-linked (GlcNAc...) asparagine). The next 5 membrane-spanning stretches (helical) occupy residues Leu35–Ile55, Ala102–Gly122, Ile142–Ala162, Leu172–Phe192, and His206–Ser226. Asn237 is a glycosylation site (N-linked (GlcNAc...) asparagine). The next 2 membrane-spanning stretches (helical) occupy residues Gly240–Pro260 and Leu282–Gln302.

This sequence belongs to the ZIP transporter (TC 2.A.5) family.

The protein localises to the golgi apparatus. The protein resides in the trans-Golgi network membrane. Its subcellular location is the cell membrane. It is found in the cytoplasm. It localises to the perinuclear region. The protein localises to the mitochondrion. The protein resides in the nucleus. It catalyses the reaction Zn(2+)(in) = Zn(2+)(out). Its function is as follows. Transports zinc ions across cell and organelle membranes into the cytoplasm and regulates intracellular zinc homeostasis. Participates in the zinc ions efflux out of the secretory compartments. Regulates intracellular zinc level, resulting in the enhancement of AKT1 and MAPK3/MAPK1 (Erk1/2) phosphorylation in response to the BCR activation. Also functions as a membrane androgen receptor that mediates, through a G protein, the non-classical androgen signaling pathway, characterized by the activation of MAPK3/MAPK1 (Erk1/2) and transcription factors CREB1 or ATF1. Moreover, has dual functions as a membrane-bound androgen receptor and as an androgen-dependent zinc transporter both of which are mediated through an inhibitory G protein (Gi) that mediates both MAP kinase and zinc signaling leading to the androgen-dependent apoptotic process. This Xenopus laevis (African clawed frog) protein is Zinc transporter ZIP9-A (slc39a9-a).